Consider the following 144-residue polypeptide: MQRISALGLDLGHRRIGVAGCDGTGLIATGLTTIRRTSFTKDMEILRQIVVDRQVKTLVVGLPYTMKGEVGTQAQKTQKLAKRIAKALDLPLDFIDERLTSHEAESMMREQRINPAEQKGMIDRKAAALILQRWLDQKPWLSST.

It belongs to the YqgF nuclease family.

The protein localises to the cytoplasm. In terms of biological role, could be a nuclease involved in processing of the 5'-end of pre-16S rRNA. In Acaryochloris marina (strain MBIC 11017), this protein is Putative pre-16S rRNA nuclease.